Consider the following 348-residue polypeptide: Rhodopsin (348 aa).

At M1 the chain carries N-acetylmethionine. At 1–36 (MNGTEGPNFYVPFSNATGVVRSPFEYPQYYLAEPWQ) the chain is on the extracellular side. N-linked (GlcNAc...) asparagine glycans are attached at residues N2 and N15. The chain crosses the membrane as a helical span at residues 37-61 (FSMLAAYMFLLIVLGFPINFLTLYV). Residues 62 to 73 (TVQHKKLRTPLN) are Cytoplasmic-facing. A helical transmembrane segment spans residues 74 to 96 (YILLNLAVADLFMVFGGFTTTLY). The Extracellular segment spans residues 97-110 (TSLHGYFVFGPTGC). C110 and C187 form a disulfide bridge. A helical transmembrane segment spans residues 111-133 (NLEGFFATLGGEIALWSLVVLAI). A 'Ionic lock' involved in activated form stabilization motif is present at residues 134–136 (ERY). Topologically, residues 134–152 (ERYVVICKPMSNFRFGENH) are cytoplasmic. A helical membrane pass occupies residues 153–173 (AIMGVVFTWIMALACAAPPLV). The Extracellular portion of the chain corresponds to 174-202 (GWSRYIPEGMQCSCGVDYYTLKPEVNNES). E201 is a binding site for Zn(2+). A helical membrane pass occupies residues 203–224 (FVIYMFVVHFTIPLIVIFFCYG). Residues 225–252 (QLVFTVKEAAAQQQESATTQKAEKEVTR) are Cytoplasmic-facing. A helical membrane pass occupies residues 253 to 274 (MVILMVVFFLICWFPYAGVAFY). Over 275–286 (IFTHQGSNFGPI) the chain is Extracellular. Q279 contributes to the Zn(2+) binding site. A helical transmembrane segment spans residues 287 to 308 (FMTLPAFFAKSSSIYNPVIYIM). An N6-(retinylidene)lysine modification is found at K296. Residues 309-348 (MNKQFRNCMLTTLCCGKNILGDDEASATASKTETSQVAPA) are Cytoplasmic-facing. 2 S-palmitoyl cysteine lipidation sites follow: C322 and C323. The interaction with SAG stretch occupies residues 330-348 (DDEASATASKTETSQVAPA). S334 carries the post-translational modification Phosphoserine. A Phosphothreonine modification is found at T336. A Phosphoserine modification is found at S338. Phosphothreonine occurs at positions 340 and 342. S343 bears the Phosphoserine mark.

It belongs to the G-protein coupled receptor 1 family. Opsin subfamily. Homodimer. May form a complex composed of RHO, GRK1 and RCVRN in a Ca(2+)-dependent manner; RCVRN prevents the interaction between GRK1 and RHO. Interacts with GRK1. Interacts (phosphorylated form) with SAG. Interacts with GNAT1. Interacts with GNAT3. SAG and G-proteins compete for a common binding site. Interacts with PRCD; the interaction promotes PRCD stability. Forms a complex with ASAP1 and ARF4. Forms a complex with ASAP1, RAB11A, Rabin8/RAB3IP, ARF4 and RAB11FIP3; the complex regulates Golgi-to-cilia rhodopsin/RHO transport in photoreceptors. Phosphorylated on some or all of the serine and threonine residues present in the C-terminal region. In terms of processing, contains one covalently linked retinal chromophore. Upon light absorption, the covalently bound 11-cis-retinal is converted to all-trans-retinal. After hydrolysis of the Schiff base and release of the covalently bound all-trans-retinal, active rhodopsin is regenerated by binding of a fresh molecule of 11-cis-retinal.

The protein resides in the membrane. It localises to the cell projection. Its subcellular location is the cilium. It is found in the photoreceptor outer segment. Functionally, photoreceptor required for image-forming vision at low light intensity. Required for photoreceptor cell viability after birth. Light-induced isomerization of 11-cis to all-trans retinal triggers a conformational change that activates signaling via G-proteins. Subsequent receptor phosphorylation mediates displacement of the bound G-protein alpha subunit by the arrestin SAG and terminates signaling. This Cricetulus griseus (Chinese hamster) protein is Rhodopsin (RHO).